Here is an 82-residue protein sequence, read N- to C-terminus: uncharacterized protein (82 aa).

In terms of biological role, this protein may be involved in virus assembly. This is an uncharacterized protein from Sulfolobus spindle-shape virus 1 (SSV1).